The sequence spans 163 residues: HTH-type transcriptional regulator IscR (163 aa).

The HTH rrf2-type domain occupies 2–131 (RLTSKGRYAV…NNITLGELVN (130 aa)). Residues 28 to 51 (LADISERQGISLSYLEQLFSRLRK) constitute a DNA-binding region (H-T-H motif). 3 residues coordinate [2Fe-2S] cluster: Cys-92, Cys-98, and Cys-104.

It depends on [2Fe-2S] cluster as a cofactor.

Regulates the transcription of several operons and genes involved in the biogenesis of Fe-S clusters and Fe-S-containing proteins. This is HTH-type transcriptional regulator IscR from Klebsiella pneumoniae (strain 342).